A 49-amino-acid chain; its full sequence is Zinc-containing ferredoxin (49 aa).

The N-terminal extension stretch occupies residues 1–36; it reads GIDPNYRTSRQVVGEHQGHKVYGPVDPPKVLGIHGT. Zn(2+)-binding residues include His16 and His19. Residue Lys29 is modified to N6-methyllysine. Zn(2+) is bound at residue His34. Positions 37 to 49 are ferredoxin; it reads IVXVDFDLCIADG. Cys45 serves as a coordination point for [3Fe-4S] cluster.

[3Fe-4S] cluster is required as a cofactor. The cofactor is [4Fe-4S] cluster. Zn(2+) serves as cofactor.

Functionally, ferredoxins are iron-sulfur proteins that transfer electrons in a wide variety of metabolic reactions. In Acidianus infernus, this protein is Zinc-containing ferredoxin (zfx).